We begin with the raw amino-acid sequence, 294 residues long: Phosphate import ATP-binding protein PstB (294 aa).

The span at 1-18 shows a compositional bias: polar residues; the sequence is MSETMTNQNVVNEEQPFN. Residues 1–24 are disordered; sequence MSETMTNQNVVNEEQPFNESKHRS. One can recognise an ABC transporter domain in the interval 48 to 289; it reads LEVNKLKLFY…PSCKQTEDYI (242 aa). 80 to 87 provides a ligand contact to ATP; it reads GPSGCGKS.

The protein belongs to the ABC transporter superfamily. Phosphate importer (TC 3.A.1.7) family. The complex is composed of two ATP-binding proteins (PstB), two transmembrane proteins (PstC and PstA) and a solute-binding protein (PstS).

The protein resides in the cell inner membrane. It catalyses the reaction phosphate(out) + ATP + H2O = ADP + 2 phosphate(in) + H(+). In terms of biological role, part of the ABC transporter complex PstSACB involved in phosphate import. Responsible for energy coupling to the transport system. In Hahella chejuensis (strain KCTC 2396), this protein is Phosphate import ATP-binding protein PstB.